The sequence spans 549 residues: Cytoplasmic trehalase (549 aa).

Residues R168, 175–176, N212, 221–223, 292–294, and G324 each bind substrate; these read WD, RSQ, and RDE. Residues D326 and E509 each act as proton donor/acceptor in the active site. Position 525 (E525) interacts with substrate.

It belongs to the glycosyl hydrolase 37 family. As to quaternary structure, monomer.

The protein localises to the cytoplasm. The catalysed reaction is alpha,alpha-trehalose + H2O = alpha-D-glucose + beta-D-glucose. It participates in glycan degradation; trehalose degradation; D-glucose from alpha,alpha-trehalose: step 1/1. Its function is as follows. Hydrolyzes trehalose to glucose. Could be involved, in cells returning to low osmolarity conditions, in the utilization of the accumulated cytoplasmic trehalose, which was synthesized in response to high osmolarity. This chain is Cytoplasmic trehalase, found in Escherichia coli O157:H7.